The sequence spans 662 residues: DNA ligase (662 aa).

NAD(+) contacts are provided by residues 31–35 (DYEYD), 80–81 (SL), and Glu109. Lys111 serves as the catalytic N6-AMP-lysine intermediate. Arg132, Glu166, Lys282, and Lys306 together coordinate NAD(+). 4 residues coordinate Zn(2+): Cys400, Cys403, Cys418, and Cys423. The region spanning 581–662 (KVSNIFEGKT…FEEMLKGENI (82 aa)) is the BRCT domain.

The protein belongs to the NAD-dependent DNA ligase family. LigA subfamily. Mg(2+) serves as cofactor. It depends on Mn(2+) as a cofactor.

It carries out the reaction NAD(+) + (deoxyribonucleotide)n-3'-hydroxyl + 5'-phospho-(deoxyribonucleotide)m = (deoxyribonucleotide)n+m + AMP + beta-nicotinamide D-nucleotide.. DNA ligase that catalyzes the formation of phosphodiester linkages between 5'-phosphoryl and 3'-hydroxyl groups in double-stranded DNA using NAD as a coenzyme and as the energy source for the reaction. It is essential for DNA replication and repair of damaged DNA. This Thermoanaerobacter sp. (strain X514) protein is DNA ligase.